The chain runs to 609 residues: Protein kinase PVPK-1 (609 aa).

The span at 1-19 shows a compositional bias: polar residues; that stretch reads MESSVNGVDSLSEVQNSVS. Disordered regions lie at residues 1 to 51 and 80 to 100; these read MESS…GHQT and PTKL…EPNG. Residues 229–565 form the Protein kinase domain; that stretch reads FRLLKKLGCG…ATEIKQHPFF (337 aa). ATP contacts are provided by residues 235–243 and lysine 258; that span reads LGCGDIGSV. Aspartate 354 (proton acceptor) is an active-site residue. Residues 429 to 448 form a disordered region; the sequence is GKSKKDKKSKPKNDMHNQVT.

It belongs to the protein kinase superfamily. Ser/Thr protein kinase family.

The catalysed reaction is L-seryl-[protein] + ATP = O-phospho-L-seryl-[protein] + ADP + H(+). It carries out the reaction L-threonyl-[protein] + ATP = O-phospho-L-threonyl-[protein] + ADP + H(+). This Phaseolus vulgaris (Kidney bean) protein is Protein kinase PVPK-1.